The primary structure comprises 807 residues: Leucine--tRNA ligase (807 aa).

Positions 40-51 (PYPSGSGLHVGH) match the 'HIGH' region motif. A 'KMSKS' region motif is present at residues 576–580 (KMSKS). Residue Lys579 coordinates ATP.

It belongs to the class-I aminoacyl-tRNA synthetase family.

It is found in the cytoplasm. It carries out the reaction tRNA(Leu) + L-leucine + ATP = L-leucyl-tRNA(Leu) + AMP + diphosphate. The sequence is that of Leucine--tRNA ligase from Chlorobaculum tepidum (strain ATCC 49652 / DSM 12025 / NBRC 103806 / TLS) (Chlorobium tepidum).